A 407-amino-acid chain; its full sequence is Substance-P receptor (407 aa).

At 1–31 (MDNVLPMDSDLFPNISTNTSESNQFVQPTWQ) the chain is on the extracellular side. Asn14 and Asn18 each carry an N-linked (GlcNAc...) asparagine glycan. The chain crosses the membrane as a helical span at residues 32–54 (IVLWAAAYTVIVVTSVVGNVVVI). The Cytoplasmic portion of the chain corresponds to 55 to 64 (WIILAHKRMR). Residues 65-86 (TVTNYFLVNLAFAEACMAAFNT) traverse the membrane as a helical segment. The Extracellular portion of the chain corresponds to 87–106 (VVNFTYAVHNVWYYGLFYCK). A disulfide bridge connects residues Cys105 and Cys180. The helical transmembrane segment at 107–128 (FHNFFPIAALFASIYSMTAVAF) threads the bilayer. Over 129–148 (DRYMAIIHPLQPRLSATATK) the chain is Cytoplasmic. The chain crosses the membrane as a helical span at residues 149 to 169 (VVIFVIWVLALLLAFPQGYYS). The Extracellular segment spans residues 170–194 (TTETMPSRVVCMIEWPEHPNRTYEK). The helical transmembrane segment at 195 to 219 (AYHICVTVLIYFLPLLVIGYAYTVV) threads the bilayer. At 220-248 (GITLWASEIPGDSSDRYHEQVSAKRKVVK) the chain is on the cytoplasmic side. A helical membrane pass occupies residues 249-270 (MMIVVVCTFAICWLPFHVFFLL). Residues 271–283 (PYINPDLYLKKFI) lie on the Extracellular side of the membrane. The chain crosses the membrane as a helical span at residues 284–308 (QQVYLASMWLAMSSTMYNPIIYCCL). The Cytoplasmic portion of the chain corresponds to 309 to 407 (NDRFRLGFKH…SSSFYSNMLA (99 aa)). Cys322 carries S-palmitoyl cysteine lipidation. Residues 362 to 407 (VGAHEEEPEEGPKATPSSLDLTSNGSSRSNSKTMTESSSFYSNMLA) are disordered. The span at 376 to 407 (TPSSLDLTSNGSSRSNSKTMTESSSFYSNMLA) shows a compositional bias: polar residues.

Belongs to the G-protein coupled receptor 1 family. As to quaternary structure, interacts with ARRB1.

It is found in the cell membrane. Its function is as follows. This is a receptor for the tachykinin neuropeptide substance P. It is probably associated with G proteins that activate a phosphatidylinositol-calcium second messenger system. The rank order of affinity of this receptor to tachykinins is: substance P &gt; substance K &gt; neuromedin-K. The sequence is that of Substance-P receptor (Tacr1) from Rattus norvegicus (Rat).